We begin with the raw amino-acid sequence, 560 residues long: Diphtheria toxin (560 aa).

The first 25 residues, M1–A25, serve as a signal peptide directing secretion. 2 residues coordinate NAD(+): H46 and Y90. The active site involves E173. 2 disulfides stabilise this stretch: C211/C226 and C486/C496.

In terms of assembly, homodimer.

The catalysed reaction is diphthamide-[translation elongation factor 2] + NAD(+) = N-(ADP-D-ribosyl)diphthamide-[translation elongation factor 2] + nicotinamide + H(+). In terms of biological role, diphtheria toxin, produced by a phage infecting Corynebacterium diphtheriae, is a proenzyme that, after activation, catalyzes the covalent attachment of the ADP ribose moiety of NAD to elongation factor 2. Fragment A is responsible for enzymatic ADP-ribosylation of elongation factor 2, while fragment B is responsible for binding of toxin to cell receptors and entry of fragment A. The chain is Diphtheria toxin from Corynephage omega.